The sequence spans 627 residues: RNA interference defective protein 10 (627 aa).

Disordered stretches follow at residues 1-31, 467-487, and 523-589; these read MSNH…VRQN, QRDT…HDQY, and SSVR…SEDY. Composition is skewed to basic and acidic residues over residues 7-16, 467-478, and 526-537; these read NFRDYQREGI, QRDTDEQYDVHQ, and REPEHPSARSRD.

It belongs to the maelstrom family. As to quaternary structure, interacts with rde-11 (via RING-type zinc finger domain). Interacts with ergo-1.

In complex with rde-11, required in the endogenous and exogenous siRNA pathway for biogenesis and accumulation of secondary small interfering RNA (siRNA) intermediates, such as 22G-siRNAs derived from ergo-1 targets. In Caenorhabditis elegans, this protein is RNA interference defective protein 10.